A 332-amino-acid chain; its full sequence is Adenosine deaminase (332 aa).

The Zn(2+) site is built by His12 and His14. Residues His14, Asp16, and Gly170 each coordinate substrate. His197 contacts Zn(2+). The active-site Proton donor is the Glu200. Zn(2+) is bound at residue Asp278.

Belongs to the metallo-dependent hydrolases superfamily. Adenosine and AMP deaminases family. Adenosine deaminase subfamily. Zn(2+) serves as cofactor.

The catalysed reaction is adenosine + H2O + H(+) = inosine + NH4(+). The enzyme catalyses 2'-deoxyadenosine + H2O + H(+) = 2'-deoxyinosine + NH4(+). Functionally, catalyzes the hydrolytic deamination of adenosine and 2-deoxyadenosine. In Clostridium perfringens (strain SM101 / Type A), this protein is Adenosine deaminase.